The primary structure comprises 594 residues: Shugoshin (594 aa).

The stretch at K38 to S61 forms a coiled coil. Disordered stretches follow at residues S104–R178, Q201–N266, S342–R380, and T519–Q549. Positions E220–N240 form a coiled coil. Over residues Q224–E239 the composition is skewed to basic and acidic residues. Over residues S252 to S261 the composition is skewed to polar residues. A compositionally biased stretch (basic residues) spans K343–L355. A compositionally biased stretch (basic and acidic residues) spans G357 to E376. Composition is skewed to polar residues over residues T519–N532 and N539–Q549.

It belongs to the shugoshin family.

It localises to the nucleus. It is found in the chromosome. The protein resides in the centromere. Plays a central role in chromosome cohesion during cell division by preventing premature dissociation of cohesin complex from centromeres after prophase, when most of cohesin complex dissociates from chromosomes arms. This Kluyveromyces lactis (strain ATCC 8585 / CBS 2359 / DSM 70799 / NBRC 1267 / NRRL Y-1140 / WM37) (Yeast) protein is Shugoshin (SGO1).